The following is a 144-amino-acid chain: Large ribosomal subunit protein uL13 (144 aa).

Belongs to the universal ribosomal protein uL13 family. In terms of assembly, part of the 50S ribosomal subunit.

Its function is as follows. This protein is one of the early assembly proteins of the 50S ribosomal subunit, although it is not seen to bind rRNA by itself. It is important during the early stages of 50S assembly. This is Large ribosomal subunit protein uL13 from Mycoplasmopsis synoviae (strain 53) (Mycoplasma synoviae).